A 579-amino-acid polypeptide reads, in one-letter code: Pre-mRNA-processing factor 17 (579 aa).

Over residues 1 to 19 (MSAAIAALAASYGSGSGSE) the composition is skewed to low complexity. 2 disordered regions span residues 1-34 (MSAA…LPAA) and 204-237 (DVAK…PGEE). WD repeat units lie at residues 286-326 (GHTK…RCLR), 330-369 (GHSK…CISR), 371-413 (TNRK…IVQE), 416-455 (RHLG…DFKY), 459-498 (PSMH…RLNK), 504-545 (GHMV…LYSR), and 548-578 (AHDK…IKLW).

Component of the catalytic spliceosome C complexes. Component of the postcatalytic spliceosome P complex. Interacts with PPIL1; this interaction leads to CDC40 isomerization. In terms of processing, undergoes isomerization of the peptide bond between Gly-94 and Pro-95. The reaction is catalyzed by PPIL1.

It localises to the nucleus. The protein resides in the nucleus speckle. Its function is as follows. Required for pre-mRNA splicing as component of the activated spliceosome. Plays an important role in embryonic brain development; this function does not require proline peptide bond isomerization. The chain is Pre-mRNA-processing factor 17 (Cdc40) from Mus musculus (Mouse).